Consider the following 201-residue polypeptide: Probable molybdenum cofactor guanylyltransferase (201 aa).

GTP-binding positions include 6-8 (LAG), Lys-18, Asp-67, and Asp-92. Asp-92 serves as a coordination point for Mg(2+).

It belongs to the MobA family. Requires Mg(2+) as cofactor.

The protein localises to the cytoplasm. The enzyme catalyses Mo-molybdopterin + GTP + H(+) = Mo-molybdopterin guanine dinucleotide + diphosphate. Transfers a GMP moiety from GTP to Mo-molybdopterin (Mo-MPT) cofactor (Moco or molybdenum cofactor) to form Mo-molybdopterin guanine dinucleotide (Mo-MGD) cofactor. The chain is Probable molybdenum cofactor guanylyltransferase from Thermococcus kodakarensis (strain ATCC BAA-918 / JCM 12380 / KOD1) (Pyrococcus kodakaraensis (strain KOD1)).